The following is a 310-amino-acid chain: Elongation factor Ts, mitochondrial (310 aa).

The N-terminal 42 residues, 1-42 (MGFQVLRSVIQAPLAKRSFLCKSCPSGLRVLYNNILLSSRSY), are a transit peptide targeting the mitochondrion.

This sequence belongs to the EF-Ts family.

It is found in the mitochondrion. Functionally, associates with the EF-Tu.GDP complex and induces the exchange of GDP to GTP. It remains bound to the aminoacyl-tRNA.EF-Tu.GTP complex up to the GTP hydrolysis stage on the ribosome. This is Elongation factor Ts, mitochondrial (tsf1) from Schizosaccharomyces japonicus (strain yFS275 / FY16936) (Fission yeast).